Here is a 200-residue protein sequence, read N- to C-terminus: ATP synthase subunit delta', mitochondrial (200 aa).

The N-terminal 21 residues, M1 to F21, are a transit peptide targeting the mitochondrion.

It belongs to the ATPase epsilon chain family. As to quaternary structure, F-type ATPases have 2 components, CF(1) - the catalytic core - and CF(0) - the membrane proton channel. CF(1) has five subunits: alpha(3), beta(3), gamma(1), delta(1), epsilon(1). CF(0) has three main subunits: a, b and c.

It is found in the mitochondrion. Its subcellular location is the mitochondrion inner membrane. Its function is as follows. Mitochondrial membrane ATP synthase (F(1)F(0) ATP synthase or Complex V) produces ATP from ADP in the presence of a proton gradient across the membrane which is generated by electron transport complexes of the respiratory chain. F-type ATPases consist of two structural domains, F(1) - containing the extramembraneous catalytic core, and F(0) - containing the membrane proton channel, linked together by a central stalk and a peripheral stalk. During catalysis, ATP turnover in the catalytic domain of F(1) is coupled via a rotary mechanism of the central stalk subunits to proton translocation. Part of the complex F(1) domain and of the central stalk which is part of the complex rotary element. Rotation of the central stalk against the surrounding alpha(3)beta(3) subunits leads to hydrolysis of ATP in three separate catalytic sites on the beta subunits. The sequence is that of ATP synthase subunit delta', mitochondrial from Ipomoea batatas (Sweet potato).